A 331-amino-acid chain; its full sequence is GTPase Obg (331 aa).

An Obg domain is found at 1–159 (MQFIDQARIA…RELQLELKLL (159 aa)). The OBG-type G domain maps to 160-328 (AEVGLVGLPN…LLQQVWQELG (169 aa)). Residues 166-173 (GLPNAGKS), 191-195 (FTTLV), 213-216 (DIPG), 280-283 (SKSE), and 309-311 (SAV) each bind GTP. Positions 173 and 193 each coordinate Mg(2+).

This sequence belongs to the TRAFAC class OBG-HflX-like GTPase superfamily. OBG GTPase family. As to quaternary structure, monomer. The cofactor is Mg(2+).

It localises to the cytoplasm. Functionally, an essential GTPase which binds GTP, GDP and possibly (p)ppGpp with moderate affinity, with high nucleotide exchange rates and a fairly low GTP hydrolysis rate. Plays a role in control of the cell cycle, stress response, ribosome biogenesis and in those bacteria that undergo differentiation, in morphogenesis control. The protein is GTPase Obg of Synechococcus sp. (strain RCC307).